A 338-amino-acid polypeptide reads, in one-letter code: Lipoate-protein ligase A (338 aa).

One can recognise a BPL/LPL catalytic domain in the interval 29-216; the sequence is PATQRVLFLW…AFFAHYGERV (188 aa). ATP is bound by residues arginine 71, 76–79, and lysine 134; that span reads GAVF. Residue lysine 134 participates in (R)-lipoate binding.

The protein belongs to the LplA family. As to quaternary structure, monomer.

Its subcellular location is the cytoplasm. It catalyses the reaction L-lysyl-[lipoyl-carrier protein] + (R)-lipoate + ATP = N(6)-[(R)-lipoyl]-L-lysyl-[lipoyl-carrier protein] + AMP + diphosphate + H(+). The protein operates within protein modification; protein lipoylation via exogenous pathway; protein N(6)-(lipoyl)lysine from lipoate: step 1/2. It participates in protein modification; protein lipoylation via exogenous pathway; protein N(6)-(lipoyl)lysine from lipoate: step 2/2. Functionally, catalyzes both the ATP-dependent activation of exogenously supplied lipoate to lipoyl-AMP and the transfer of the activated lipoyl onto the lipoyl domains of lipoate-dependent enzymes. This chain is Lipoate-protein ligase A, found in Shigella dysenteriae serotype 1 (strain Sd197).